The primary structure comprises 317 residues: 3',5'-bisphosphate nucleotidase (317 aa).

Asp46 serves as the catalytic Proton acceptor. Glu69, Asp118, Ile120, and Asp121 together coordinate Mg(2+). Catalysis depends on Thr123, which acts as the Proton acceptor. Adenosine 3',5'-bisphosphate is bound at residue Thr123. Positions 198, 203, 227, 230, 244, 251, and 257 each coordinate AMP. Adenosine 3',5'-bisphosphate is bound by residues His203, Ser227, Lys230, and Arg244. Asp257 contacts Mg(2+). Asp257 is an adenosine 3',5'-bisphosphate binding site.

This sequence belongs to the inositol monophosphatase superfamily. As to quaternary structure, monomer. Mg(2+) is required as a cofactor.

The protein localises to the cytoplasm. The catalysed reaction is adenosine 3',5'-bisphosphate + H2O = AMP + phosphate. It carries out the reaction 1D-myo-inositol 1,4-bisphosphate + H2O = 1D-myo-inositol 4-phosphate + phosphate. Its activity is regulated as follows. Inhibited by Li(2+). In terms of biological role, phosphatase that converts 3'-phosphoadenosine 5'-phosphate (PAP) to AMP. Is also able to hydrolyze inositol 1,4-bisphosphate but with less efficiency. This chain is 3',5'-bisphosphate nucleotidase, found in Entamoeba histolytica (strain ATCC 30459 / HM-1:IMSS / ABRM).